The sequence spans 218 residues: Albicidin resistance protein (218 aa).

The protein resides in the periplasm. In terms of biological role, albicidin resistance protein binds to form a complex without antibiotic activity but without catalyzing any further chemical modifications to albicidin. In Klebsiella oxytoca, this protein is Albicidin resistance protein.